Consider the following 484-residue polypeptide: Glutamate--tRNA ligase (484 aa).

The 'HIGH' region signature appears at 11–21 (PSPTGYPHLGN). Zn(2+) contacts are provided by C108, C110, C135, and D137. The short motif at 245 to 249 (KLSKR) is the 'KMSKS' region element. K248 is a binding site for ATP.

Belongs to the class-I aminoacyl-tRNA synthetase family. Glutamate--tRNA ligase type 1 subfamily. As to quaternary structure, monomer. Requires Zn(2+) as cofactor.

The protein localises to the cytoplasm. It catalyses the reaction tRNA(Glu) + L-glutamate + ATP = L-glutamyl-tRNA(Glu) + AMP + diphosphate. Its function is as follows. Catalyzes the attachment of glutamate to tRNA(Glu) in a two-step reaction: glutamate is first activated by ATP to form Glu-AMP and then transferred to the acceptor end of tRNA(Glu). In Dehalococcoides mccartyi (strain ATCC BAA-2266 / KCTC 15142 / 195) (Dehalococcoides ethenogenes (strain 195)), this protein is Glutamate--tRNA ligase.